A 243-amino-acid chain; its full sequence is Carboxy-S-adenosyl-L-methionine synthase (243 aa).

Residues Y40, 65–67, 90–91, 118–119, N133, and R200 each bind S-adenosyl-L-methionine; these read GCS, DN, and DI.

Belongs to the class I-like SAM-binding methyltransferase superfamily. Cx-SAM synthase family. Homodimer.

It carries out the reaction prephenate + S-adenosyl-L-methionine = carboxy-S-adenosyl-L-methionine + 3-phenylpyruvate + H2O. Functionally, catalyzes the conversion of S-adenosyl-L-methionine (SAM) to carboxy-S-adenosyl-L-methionine (Cx-SAM). This Shewanella baltica (strain OS155 / ATCC BAA-1091) protein is Carboxy-S-adenosyl-L-methionine synthase.